The sequence spans 596 residues: Aspartate--tRNA(Asp/Asn) ligase (596 aa).

Residue glutamate 175 participates in L-aspartate binding. The aspartate stretch occupies residues 199–202 (QQYK). Residues arginine 221 and histidine 454 each coordinate L-aspartate. An ATP-binding site is contributed by 221 to 223 (RDE). Glutamate 488 serves as a coordination point for ATP. Residue arginine 495 participates in L-aspartate binding. 540 to 543 (GIDR) lines the ATP pocket.

This sequence belongs to the class-II aminoacyl-tRNA synthetase family. Type 1 subfamily. As to quaternary structure, homodimer.

It localises to the cytoplasm. The enzyme catalyses tRNA(Asx) + L-aspartate + ATP = L-aspartyl-tRNA(Asx) + AMP + diphosphate. Functionally, aspartyl-tRNA synthetase with relaxed tRNA specificity since it is able to aspartylate not only its cognate tRNA(Asp) but also tRNA(Asn). Reaction proceeds in two steps: L-aspartate is first activated by ATP to form Asp-AMP and then transferred to the acceptor end of tRNA(Asp/Asn). The protein is Aspartate--tRNA(Asp/Asn) ligase of Mesorhizobium japonicum (strain LMG 29417 / CECT 9101 / MAFF 303099) (Mesorhizobium loti (strain MAFF 303099)).